The sequence spans 2359 residues: Pre-mRNA-processing-splicing factor 8A (2359 aa).

The segment at 1-54 is disordered; that stretch reads MWNNNDGMPLAPPGTGGSMMPPPPAAHPSYTALPPPSNPTPPVEPTPEEAEAKL. Positions 33 to 45 are enriched in pro residues; sequence LPPPSNPTPPVEP. Residues 2127 to 2258 form the MPN domain; that stretch reads TYIMPKNILK…LTSYKLTQTG (132 aa).

In terms of assembly, interacts with CLO.

The protein localises to the nucleus. Its function is as follows. Functions as a scaffold that mediates the ordered assembly of spliceosomal proteins and snRNAs. Required for the assembly of the U4/U6-U5 tri-snRNP complex. Required for embryo development. Required for splicing efficiency of COOLAIR introns and usage of the proximal poly(A) site. COOLAIR is a set of long non-coding antisense transcripts produced at the FLOWERING LOCUS C (FLC). COOLAIR initiates just downstream of the major sense transcript poly(A) site and terminates either early or extends into the FLC promoter region. Splicing of COOLAIR by PRP8A is functionally important for FLC regulation. The protein is Pre-mRNA-processing-splicing factor 8A of Arabidopsis thaliana (Mouse-ear cress).